The following is a 1063-amino-acid chain: MFERIISFAIQQRWLVLLAVFGMAGLGIFSYNRLPIDAVPDITNVQVQVNTSAPGYSPLETEQRVTYPIEVVMAGLPGLEQTRSLSRYGLSQVTVIFKDGTDVYFARQLVNQRIQEAKDNLPEGVVPAMGPISTGLGEIYLWTVEAEEGARKADGTAYTPTDLREIQDWVVRPQLRNVPGVTEINTIGGFNKQYLVAPSLERLASYGLTLTDVVNALNKNNDNVGAGYIERRGEQYLVRAPGQVASEDDIRNIIVGTAQGQPIRIRDIGDVEIGKELRTGAATENGKEVVLGTVFMLIGENSRAVSKAVDEKVASINRTMPEGVKIVTVYDRTRLVDKAIATVKKNLLEGAVLVIVILFLFLGNIRAALITATIIPLAMLFTFTGMVNYKISANLMSLGALDFGIIIDGAVVIVENCVRRLAHAQEHHGRPLTRSERFHEVFAAAKEARRPLIFGQLIIMIVYLPIFALTGVEGKMFHPMAFTVVLALLGAMILSVTFVPAAVALFIGERVAEKENRLMLWAKRRYEPLLEKSLANTAVVLTFAAVSIVLCVAIAARLGSEFIPNLNEGDIAIQALRIPGTSLSQSVEMQKTIETTLKAKFPEIERVFARTGTAEIASDPMPPNISDGYIMLKPEKDWPEPKKTHAELLSAIQEEAGKIPGNNYEFSQPIQLRFNELISGVRSDVAVKIFGDDNNVLSETAKKVSAVLQGIPGAQEVKVEQTTGLPMLTVKIDREKAARYGLNMSDVQDAVATGVGGRDSGTFFQGDRRFDIVVRLPEAVRGEVEALRRLPIPLPKGVDARTTFIPLSEVATLEMAPGPNQISRENGKRRIVISANVRGRDIGSFVPEAEAAIQSQVKIPAGYWMTWGGTFEQLQSATTRLQVVVPVALLLVFVLLFAMFNNIKDGLLVFTGIPFALTGGILALWIRGIPMSITAAVGFIALCGVAVLNGLVMLSFIRSLREEGHSLDSAVRVGALTRLRPVLMTALVASLGFVPMAIATGTGAEVQRPLATVVIGGILSSTALTLLVLPVLYRLAHRKDEDAEDTREPVTQTHQPDQGRQPA.

A run of 10 helical transmembrane segments spans residues 14 to 29 (WLVLLAVFGMAGLGIF), 350 to 370 (GAVLVIVILFLFLGNIRAALI), 452 to 472 (LIFGQLIIMIVYLPIFALTGV), 487 to 507 (ALLGAMILSVTFVPAAVALFI), 534 to 554 (LANTAVVLTFAAVSIVLCVAI), 883 to 903 (VVVPVALLLVFVLLFAMFNNI), 906 to 926 (GLLVFTGIPFALTGGILALWI), 937 to 957 (VGFIALCGVAVLNGLVMLSFI), 982 to 1004 (VLMTALVASLGFVPMAIATGTGA), and 1013 to 1033 (VVIGGILSSTALTLLVLPVLY). A disordered region spans residues 1040-1063 (DEDAEDTREPVTQTHQPDQGRQPA). Polar residues predominate over residues 1049-1063 (PVTQTHQPDQGRQPA).

This sequence belongs to the resistance-nodulation-cell division (RND) (TC 2.A.6) family.

Its subcellular location is the cell membrane. Has a low cation transport activity for cobalt, it is essential for the expression of cobalt, zinc, and cadmium resistance. CzcA and CzcB together would act in zinc efflux nearly as effectively as the complete CZC efflux system (CzcABC). The chain is Cation efflux system protein CzcA (czcA) from Alcaligenes sp. (strain CT14).